A 299-amino-acid chain; its full sequence is MSANDRAIETLRREIAKLQTDGAAIARKDAGIRAKLASAMAAQAKAKTAPALRLKQAEASRLEKELMATSKSQADIATKIAKKQSSLSAKLVVQANEAKKADAKAKKNQERVSKTQEEATRKLEAGYRKLTLENQSLEQRLQRELSAMKPTAGPTTNADLTSAPPHDIFISHAWEDKADFVEALAHTLRAAGAEVWYDDFSLRPGDSLRRSIDKGLGSSRFGIVVLSTHFFKKEWPQKELDGLFQLESSGRSRILPIWHKVSKDEVASFSPTMADKLAFNTSTKSVDEIVADLMAIIRD.

The 134-residue stretch at 164–297 folds into the TIR domain; the sequence is PPHDIFISHA…EIVADLMAII (134 aa). NAD(+) contacts are provided by residues 173 to 174 and arginine 203; that span reads AW. Glutamate 239 is an active-site residue.

In terms of assembly, homodimer. Interacts with host MYD88.

It carries out the reaction NAD(+) + H2O = ADP-D-ribose + nicotinamide + H(+). Its function is as follows. NAD(+) hydrolase (NADase) that catalyzes cleavage of NAD(+) into ADP-D-ribose (ADPR) and nicotinamide. This chain is NAD(+) hydrolase PdTIR, found in Paracoccus denitrificans (strain Pd 1222).